We begin with the raw amino-acid sequence, 292 residues long: Ribosomal protein L11 methyltransferase (292 aa).

Residues T145, G166, D188, and N229 each contribute to the S-adenosyl-L-methionine site.

It belongs to the methyltransferase superfamily. PrmA family.

It localises to the cytoplasm. The enzyme catalyses L-lysyl-[protein] + 3 S-adenosyl-L-methionine = N(6),N(6),N(6)-trimethyl-L-lysyl-[protein] + 3 S-adenosyl-L-homocysteine + 3 H(+). In terms of biological role, methylates ribosomal protein L11. The sequence is that of Ribosomal protein L11 methyltransferase from Nitrosococcus oceani (strain ATCC 19707 / BCRC 17464 / JCM 30415 / NCIMB 11848 / C-107).